The primary structure comprises 136 residues: Large ribosomal subunit protein uL16 (136 aa).

This sequence belongs to the universal ribosomal protein uL16 family. In terms of assembly, part of the 50S ribosomal subunit.

In terms of biological role, binds 23S rRNA and is also seen to make contacts with the A and possibly P site tRNAs. The chain is Large ribosomal subunit protein uL16 from Rickettsia typhi (strain ATCC VR-144 / Wilmington).